We begin with the raw amino-acid sequence, 462 residues long: MVKNKNNMAIWGSRIKKDASTLFQKVGNSIDIDKKLFQEDILGSIAHVEMLFRQKIISFKIKNKIIFGLNKIEKEILKNKFEYNKKYEDIHMNIEKRLFQIIGEEAGYVHTARSRNDQVITDFKMWTTSATKEINKNLDNIIKTILKISEKNIETIMPGFTHLKNAQAVSFAHYLMSYVEMFNRDKKRFTYNLESLSENPLGVAALTGTSFNIDRNFTSKKLGFKRPTNNSIDTVADRDFVLDFLYSASVCSMHISRIAEELIIWNSDGFNLITLSDKVVTGSSIMPQKKNPDLLEYLRGKTGTVYGNLFSMLTILKGLPISYFKDLQDDKEILFKSNEILNNSIAILNEVLKNLKPNKQQMLDLANSGYITATDLADYLVKNHSMPFRKAYQTTASIVNYAEKKKKKLNELNIDELKKIEPRLTIEVLKIFNVKNSVNSKKSYGGTSFDNIKKMIMKYKKT.

Belongs to the lyase 1 family. Argininosuccinate lyase subfamily.

It localises to the cytoplasm. It carries out the reaction 2-(N(omega)-L-arginino)succinate = fumarate + L-arginine. It functions in the pathway amino-acid biosynthesis; L-arginine biosynthesis; L-arginine from L-ornithine and carbamoyl phosphate: step 3/3. The protein is Argininosuccinate lyase of Pelagibacter ubique (strain HTCC1062).